A 127-amino-acid chain; its full sequence is Snaclec CHH-B subunit alpha (127 aa).

Cystine bridges form between Cys-4-Cys-15, Cys-32-Cys-120, and Cys-95-Cys-112. The region spanning 11–121 (YDRYCYKPFK…CEQQHSFICK (111 aa)) is the C-type lectin domain.

It belongs to the snaclec family. In terms of assembly, heterodimer of subunits alpha and beta; disulfide-linked. In terms of tissue distribution, expressed by the venom gland.

It is found in the secreted. Binds to the subunit GPIbalpha (GP1BA) of the platelet GPIb/V/IX receptor system. It inhibits ristocetin- and vWF-induced platelet aggregation in platelet-rich plasma by inhibiting the binding of vWF to GPIbalpha. This Crotalus horridus (Timber rattlesnake) protein is Snaclec CHH-B subunit alpha.